The primary structure comprises 66 residues: Cold shock protein 2 (66 aa).

One can recognise a CSD domain in the interval 4–63; it reads GTVKWFNADKGFGFITGEDGTDVFVHFSAIQTDGFKTLDEGQKVTYDEEQGDRGPQATNV.

Its subcellular location is the cytoplasm. The sequence is that of Cold shock protein 2 (cspL) from Lactiplantibacillus plantarum (strain ATCC BAA-793 / NCIMB 8826 / WCFS1) (Lactobacillus plantarum).